Consider the following 85-residue polypeptide: Splicing factor 3B subunit 5 (85 aa).

This sequence belongs to the SF3B5 family. As to quaternary structure, component of the SF3B complex. SF3B complex associates with the splicing factor SF3A complex and a 12S RNA unit to form the U2 small nuclear ribonucleoproteins complex (U2 snRNP). Identified in the SAGA transcription regulatory histone acetylation (HAT) complex; the interaction is RNA-independent.

The protein localises to the nucleus. In terms of biological role, involved in pre-mRNA splicing as component of spliceosome. As part of the spliceosome complex, plays a role in the regulation of spermatogonial differentiation. When associated with the SAGA transcription regulatory histone acetylation (HAT) complex, might be involved in the transcriptional activation of a subset of SAGA-regulated genes. The sequence is that of Splicing factor 3B subunit 5 from Drosophila melanogaster (Fruit fly).